A 316-amino-acid polypeptide reads, in one-letter code: Glutathione synthetase (316 aa).

The region spanning 124-311 (NEKLAALLFP…IAGLLFDAIE (188 aa)) is the ATP-grasp domain. 151-208 (FVLEHGQAVLKPLDGMGGRSIFRSGSGDPNLNVILETLTDGNRKLTLAQRFIPDITAG) contacts ATP. Positions 282 and 284 each coordinate Mg(2+).

This sequence belongs to the prokaryotic GSH synthase family. The cofactor is Mg(2+). It depends on Mn(2+) as a cofactor.

The catalysed reaction is gamma-L-glutamyl-L-cysteine + glycine + ATP = glutathione + ADP + phosphate + H(+). Its pathway is sulfur metabolism; glutathione biosynthesis; glutathione from L-cysteine and L-glutamate: step 2/2. The polypeptide is Glutathione synthetase (Xanthomonas axonopodis pv. citri (strain 306)).